A 94-amino-acid chain; its full sequence is Conotoxin Im026 (94 aa).

The signal sequence occupies residues 1 to 24; it reads MRLTTMHSVILMLLLVFAFDNVDG. Residues 25–59 constitute a propeptide that is removed on maturation; the sequence is DEPGQTARDVDNRNFMSILRSEGKPVHFLRAIKKR.

In terms of processing, contains 4 disulfide bonds. Expressed by the venom duct.

The protein localises to the secreted. Its function is as follows. Probable neurotoxin. The polypeptide is Conotoxin Im026 (Conus imperialis (Imperial cone)).